Consider the following 144-residue polypeptide: Deoxyuridine 5'-triphosphate nucleotidohydrolase (144 aa).

DUMP-binding residues include serine 66, glycine 79, aspartate 82, tyrosine 85, lysine 90, arginine 134, phenylalanine 139, and glycine 140.

Belongs to the dUTPase family. Homotrimer. The cofactor is Mg(2+).

It carries out the reaction dUTP + H2O = dUMP + diphosphate + H(+). The protein operates within pyrimidine metabolism; dUMP biosynthesis; dUMP from dCTP (dUTP route): step 2/2. Functionally, involved in nucleotide metabolism via production of dUMP, the immediate precursor of thymidine nucleotides, and decreases the intracellular concentration of dUTP so that uracil cannot be incorporated into DNA. This is Deoxyuridine 5'-triphosphate nucleotidohydrolase (DUT1) from Candida glabrata (strain ATCC 2001 / BCRC 20586 / JCM 3761 / NBRC 0622 / NRRL Y-65 / CBS 138) (Yeast).